Reading from the N-terminus, the 259-residue chain is Phosphatidate cytidylyltransferase (259 aa).

A run of 7 helical transmembrane segments spans residues 31–51, 69–89, 103–123, 129–149, 170–190, 193–213, and 236–256; these read LVIFLPKSLFLLVILFLCFAI, PLVLLTYYFADPLVFPLIGLL, FFKSTFLLFYPALFLVYLIKI, YYLLIFIFGIWINDVFAYYIG, FLGGVLFGSLFFALTLPYGIL, FLLGTFVLTVGVAGDYFKSFI, and FDALVFSAPVFYLIMCAGELN.

The protein belongs to the CDS family.

The protein resides in the cell membrane. It catalyses the reaction a 1,2-diacyl-sn-glycero-3-phosphate + CTP + H(+) = a CDP-1,2-diacyl-sn-glycerol + diphosphate. The protein operates within phospholipid metabolism; CDP-diacylglycerol biosynthesis; CDP-diacylglycerol from sn-glycerol 3-phosphate: step 3/3. This is Phosphatidate cytidylyltransferase (cdsA) from Aquifex aeolicus (strain VF5).